A 629-amino-acid chain; its full sequence is MPSTRNIEKLNDSNPTLRTLSLSALGIVYGDIGTSPLYTFKTVILLAGGGTPDVNTIMGSVSLIIWTLIIIASVKYISFALRIDNDGEGGILALMSLLSLKLKHRPFIIAVGLMGAALIYGDGTITPAISVLSAIEGLEILSPSLKYYVLPIAITILITLFAIQSKGTATIGKAFGPVMAFWFLTIGILGARGVIQHPFVLAAINPVYGLNFLFSNGATGFFILCGVFLCVTGAEALYADLGHFGTAPIRCAWFGLAFPSLIFNYLGQAALVLEGASTEHNIFYMLCPSDFLLPLIILSTVATIIASQAIITGAFSMTRQAMQLGWLPRLRVTQTSSEGYGQIYIGVVNWFLMLATLGLTIGFGSSEKLAAAYGIAVSATMLCTTVLLFIALHKLWKWNIITSGLVAGLFMIVDASFFAANLTKFINGGYIPITLAIIIYSMMYIWHKGYKTIAIKQKEKNITVDSFLDSIQKEGVVRVPKTAVFLTSKEQDIPPILVWHVKKNRVLQDKVIILNINNLSIPWCKPADQLQIVETGAGIWHAVANYGFMEQPHIPKLLKKLEAQGYDINIKDITYYIGHETIFVRNVRHTMSKYIKILFVFMHRNALPMSNYFHLPPESVFEIGRQIEI.

12 consecutive transmembrane segments (helical) span residues 20–40 (LSLS…LYTF), 61–81 (VSLI…SFAL), 106–126 (PFII…GTIT), 143–163 (PSLK…LFAI), 171–191 (IGKA…ILGA), 212–232 (FLFS…LCVT), 253–273 (WFGL…ALVL), 291–311 (FLLP…QAII), 343–363 (IYIG…TIGF), 372–392 (AYGI…FIAL), 400–420 (IITS…FFAA), and 425–445 (FING…MMYI).

The protein belongs to the HAK/KUP transporter (TC 2.A.72) family.

The protein resides in the cell inner membrane. It carries out the reaction K(+)(in) + H(+)(in) = K(+)(out) + H(+)(out). Its function is as follows. Transport of potassium into the cell. Likely operates as a K(+):H(+) symporter. The chain is Probable potassium transport system protein Kup 3 from Legionella pneumophila (strain Lens).